Reading from the N-terminus, the 684-residue chain is Protein SEEDLING PLASTID DEVELOPMENT 1 (684 aa).

The N-terminal 78 residues, 1 to 78, are a transit peptide targeting the chloroplast; it reads MRALNSRLVL…FSFDVRSPSS (78 aa). The segment at 33–91 is disordered; it reads SDSSSSFRRTRGARQRIASSKSPASSPSPVRRPSDGFSFDVRSPSSDSSISSRKSPTTA. Residues 50–88 show a composition bias toward low complexity; it reads ASSKSPASSPSPVRRPSDGFSFDVRSPSSDSSISSRKSP. Residue 220 to 227 coordinates ATP; sequence GSPGVGKT. Residues 651–684 are disordered; the sequence is PRRSTKKTLTSSSPQKSADGSMGTTGTRLPFLKD. Over residues 657–667 the composition is skewed to low complexity; sequence KTLTSSSPQKS.

The protein belongs to the ycf45 family.

The protein localises to the plastid. It is found in the chloroplast membrane. Its subcellular location is the chloroplast envelope. Its function is as follows. Required during eoplast (a highly reduced plastid type present during the degreening and dehydration stages of seed maturation) development in embryos and early stages of eoplast redifferentiation during seedling growth. In Arabidopsis thaliana (Mouse-ear cress), this protein is Protein SEEDLING PLASTID DEVELOPMENT 1.